The following is a 380-amino-acid chain: Chaperone protein DnaJ (380 aa).

The J domain maps to 5-72 (DYYDTLGVPK…QKRAAYDQYG (68 aa)). Positions 21-47 (IKKAYRKLAMKHHPDRNQGDTSKVSED) are disordered. Basic residues predominate over residues 24–34 (AYRKLAMKHHP). Basic and acidic residues predominate over residues 35-47 (DRNQGDTSKVSED). Residues 139–217 (GKEAQIRIPS…CHGVGKTKNN (79 aa)) form a CR-type zinc finger. Residues Cys-152, Cys-155, Cys-169, Cys-172, Cys-191, Cys-194, Cys-205, and Cys-208 each contribute to the Zn(2+) site. CXXCXGXG motif repeat units lie at residues 152–159 (CGICHGTG), 169–176 (CTTCHGHG), 191–198 (CPQCKGSG), and 205–212 (CVACHGVG).

The protein belongs to the DnaJ family. In terms of assembly, homodimer. Zn(2+) is required as a cofactor.

It localises to the cytoplasm. Participates actively in the response to hyperosmotic and heat shock by preventing the aggregation of stress-denatured proteins and by disaggregating proteins, also in an autonomous, DnaK-independent fashion. Unfolded proteins bind initially to DnaJ; upon interaction with the DnaJ-bound protein, DnaK hydrolyzes its bound ATP, resulting in the formation of a stable complex. GrpE releases ADP from DnaK; ATP binding to DnaK triggers the release of the substrate protein, thus completing the reaction cycle. Several rounds of ATP-dependent interactions between DnaJ, DnaK and GrpE are required for fully efficient folding. Also involved, together with DnaK and GrpE, in the DNA replication of plasmids through activation of initiation proteins. This chain is Chaperone protein DnaJ, found in Polaromonas naphthalenivorans (strain CJ2).